Consider the following 142-residue polypeptide: Large ribosomal subunit protein uL11 (142 aa).

It belongs to the universal ribosomal protein uL11 family. As to quaternary structure, part of the ribosomal stalk of the 50S ribosomal subunit. Interacts with L10 and the large rRNA to form the base of the stalk. L10 forms an elongated spine to which L12 dimers bind in a sequential fashion forming a multimeric L10(L12)X complex. One or more lysine residues are methylated.

Its function is as follows. Forms part of the ribosomal stalk which helps the ribosome interact with GTP-bound translation factors. This is Large ribosomal subunit protein uL11 from Sinorhizobium fredii (strain NBRC 101917 / NGR234).